Here is a 312-residue protein sequence, read N- to C-terminus: Ribonuclease Z (312 aa).

Zn(2+) is bound by residues H62, H64, D66, H67, H144, D215, and H273. The active-site Proton acceptor is D66.

Belongs to the RNase Z family. Homodimer. Requires Zn(2+) as cofactor.

It catalyses the reaction Endonucleolytic cleavage of RNA, removing extra 3' nucleotides from tRNA precursor, generating 3' termini of tRNAs. A 3'-hydroxy group is left at the tRNA terminus and a 5'-phosphoryl group is left at the trailer molecule.. Its function is as follows. Zinc phosphodiesterase, which displays some tRNA 3'-processing endonuclease activity. Probably involved in tRNA maturation, by removing a 3'-trailer from precursor tRNA. The polypeptide is Ribonuclease Z (Prochlorococcus marinus (strain MIT 9301)).